A 72-amino-acid polypeptide reads, in one-letter code: Tetrahydromethanopterin S-methyltransferase subunit G (72 aa).

The helical transmembrane segment at 48–68 (IGILYGGFIGLLLFLIYTVVS) threads the bilayer.

The protein belongs to the MtrG family. In terms of assembly, the complex is composed of 8 subunits; MtrA, MtrB, MtrC, MtrD, MtrE, MtrF, MtrG and MtrH.

The protein resides in the cell membrane. It carries out the reaction 5-methyl-5,6,7,8-tetrahydromethanopterin + coenzyme M + 2 Na(+)(in) = 5,6,7,8-tetrahydromethanopterin + methyl-coenzyme M + 2 Na(+)(out). The protein operates within one-carbon metabolism; methanogenesis from CO(2); methyl-coenzyme M from 5,10-methylene-5,6,7,8-tetrahydromethanopterin: step 2/2. Its function is as follows. Part of a complex that catalyzes the formation of methyl-coenzyme M and tetrahydromethanopterin from coenzyme M and methyl-tetrahydromethanopterin. This is an energy-conserving, sodium-ion translocating step. The sequence is that of Tetrahydromethanopterin S-methyltransferase subunit G from Methanosarcina barkeri (strain Fusaro / DSM 804).